We begin with the raw amino-acid sequence, 179 residues long: Inosine/xanthosine triphosphatase (179 aa).

Residue E71 coordinates Mg(2+). Residue 71-72 (EA) participates in substrate binding.

The protein belongs to the YjjX NTPase family. As to quaternary structure, homodimer. Mg(2+) serves as cofactor. Requires Mn(2+) as cofactor.

It catalyses the reaction XTP + H2O = XDP + phosphate + H(+). The catalysed reaction is ITP + H2O = IDP + phosphate + H(+). Functionally, phosphatase that hydrolyzes non-canonical purine nucleotides such as XTP and ITP to their respective diphosphate derivatives. Probably excludes non-canonical purines from DNA/RNA precursor pool, thus preventing their incorporation into DNA/RNA and avoiding chromosomal lesions. The protein is Inosine/xanthosine triphosphatase of Shewanella sp. (strain MR-4).